The following is a 442-amino-acid chain: Chromosomal replication initiator protein DnaA (442 aa).

The tract at residues 1-75 (MDAWPRCLER…GNGEVALAVG (75 aa)) is domain I, interacts with DnaA modulators. The interval 75–104 (GSRPRAPEPLPAPQAVASAPAAAPIVPFAG) is domain II. The interval 105–322 (NLDSHYTFAN…GALNTLVARA (218 aa)) is domain III, AAA+ region. ATP is bound by residues Gly150, Gly152, Lys153, and Thr154. A domain IV, binds dsDNA region spans residues 323-442 (NFTGRSITVE…WEKLIRKLSE (120 aa)).

It belongs to the DnaA family. In terms of assembly, oligomerizes as a right-handed, spiral filament on DNA at oriC.

It is found in the cytoplasm. In terms of biological role, plays an essential role in the initiation and regulation of chromosomal replication. ATP-DnaA binds to the origin of replication (oriC) to initiate formation of the DNA replication initiation complex once per cell cycle. Binds the DnaA box (a 9 base pair repeat at the origin) and separates the double-stranded (ds)DNA. Forms a right-handed helical filament on oriC DNA; dsDNA binds to the exterior of the filament while single-stranded (ss)DNA is stabiized in the filament's interior. The ATP-DnaA-oriC complex binds and stabilizes one strand of the AT-rich DNA unwinding element (DUE), permitting loading of DNA polymerase. After initiation quickly degrades to an ADP-DnaA complex that is not apt for DNA replication. Binds acidic phospholipids. The sequence is that of Chromosomal replication initiator protein DnaA from Xanthomonas campestris pv. campestris (strain B100).